The primary structure comprises 100 residues: Small ribosomal subunit protein uS14c (100 aa).

It belongs to the universal ribosomal protein uS14 family. In terms of assembly, part of the 30S ribosomal subunit.

It is found in the plastid. It localises to the chloroplast. Binds 16S rRNA, required for the assembly of 30S particles. This is Small ribosomal subunit protein uS14c from Chlorokybus atmophyticus (Soil alga).